A 974-amino-acid chain; its full sequence is Valine--tRNA ligase, chloroplastic/mitochondrial 2 (974 aa).

The 'HIGH' region signature appears at 109 to 119 (PNVTGSLHMGH). Residues 432-454 (LAEKALLAVENKELTIIPERFEK) form an LRR 1 repeat. Residues 489-518 (EEDYIVAKSAEEALEKALEKYGKDVEIYQD) adopt a coiled-coil conformation. A 'KMSKS' region motif is present at residues 598–602 (KMSKS). Lysine 601 contributes to the ATP binding site. The LRR 2 repeat unit spans residues 857–880 (LALLSRLDLNNVHFSNAPPGDANL).

Belongs to the class-I aminoacyl-tRNA synthetase family.

It is found in the plastid. The protein resides in the chloroplast. The protein localises to the mitochondrion. It catalyses the reaction tRNA(Val) + L-valine + ATP = L-valyl-tRNA(Val) + AMP + diphosphate. This chain is Valine--tRNA ligase, chloroplastic/mitochondrial 2, found in Arabidopsis thaliana (Mouse-ear cress).